We begin with the raw amino-acid sequence, 183 residues long: Acireductone dioxygenase (183 aa).

Fe(2+)-binding residues include histidine 95, histidine 97, glutamate 101, and histidine 139. Ni(2+) is bound by residues histidine 95, histidine 97, glutamate 101, and histidine 139.

This sequence belongs to the acireductone dioxygenase (ARD) family. Monomer. Fe(2+) is required as a cofactor. Ni(2+) serves as cofactor.

It catalyses the reaction 1,2-dihydroxy-5-(methylsulfanyl)pent-1-en-3-one + O2 = 3-(methylsulfanyl)propanoate + CO + formate + 2 H(+). The catalysed reaction is 1,2-dihydroxy-5-(methylsulfanyl)pent-1-en-3-one + O2 = 4-methylsulfanyl-2-oxobutanoate + formate + 2 H(+). It participates in amino-acid biosynthesis; L-methionine biosynthesis via salvage pathway; L-methionine from S-methyl-5-thio-alpha-D-ribose 1-phosphate: step 5/6. Functionally, catalyzes 2 different reactions between oxygen and the acireductone 1,2-dihydroxy-3-keto-5-methylthiopentene (DHK-MTPene) depending upon the metal bound in the active site. Fe-containing acireductone dioxygenase (Fe-ARD) produces formate and 2-keto-4-methylthiobutyrate (KMTB), the alpha-ketoacid precursor of methionine in the methionine recycle pathway. Ni-containing acireductone dioxygenase (Ni-ARD) produces methylthiopropionate, carbon monoxide and formate, and does not lie on the methionine recycle pathway. This chain is Acireductone dioxygenase, found in Hydrogenobaculum sp. (strain Y04AAS1).